Reading from the N-terminus, the 287-residue chain is Ribosomal RNA small subunit methyltransferase A (287 aa).

S-adenosyl-L-methionine contacts are provided by Asn28, Leu30, Gly55, Glu77, Asp103, and Asn123.

It belongs to the class I-like SAM-binding methyltransferase superfamily. rRNA adenine N(6)-methyltransferase family. RsmA subfamily.

The protein localises to the cytoplasm. It catalyses the reaction adenosine(1518)/adenosine(1519) in 16S rRNA + 4 S-adenosyl-L-methionine = N(6)-dimethyladenosine(1518)/N(6)-dimethyladenosine(1519) in 16S rRNA + 4 S-adenosyl-L-homocysteine + 4 H(+). Specifically dimethylates two adjacent adenosines (A1518 and A1519) in the loop of a conserved hairpin near the 3'-end of 16S rRNA in the 30S particle. May play a critical role in biogenesis of 30S subunits. This chain is Ribosomal RNA small subunit methyltransferase A, found in Rhodopseudomonas palustris (strain BisA53).